The primary structure comprises 24 residues: Caerin-2.1 (24 aa).

This sequence belongs to the frog skin active peptide (FSAP) family. Caerin subfamily. In terms of tissue distribution, expressed by the skin dorsal glands.

The protein resides in the secreted. Inhibits the formation of NO by neuronal nitric oxide synthase. In Litoria rothii (Roth's tree frog), this protein is Caerin-2.1.